Here is a 237-residue protein sequence, read N- to C-terminus: Cytosolic-abundant heat soluble protein 1 (237 aa).

Basic and acidic residues-rich tracts occupy residues Met-1 to Gln-17 and Val-91 to Arg-105. 2 disordered regions span residues Met-1–Glu-35 and Ser-85–Arg-105. The stretch at Lys-98–Ala-201 forms a coiled coil. CAHS motif stretches follow at residues Tyr-132 to Gln-150 and Gln-169 to Glu-187. The segment at Ala-212–His-237 is disordered. Positions Asp-226–His-237 are enriched in basic and acidic residues.

It belongs to the Cytosolic-abundant heat soluble protein (CAHS) family.

Its subcellular location is the cytoplasm. The protein localises to the nucleus. CAHS proteins are cytosolic heat soluble proteins that seem to contribute to the anhydrobiosis in tardigrades, but their specific mechanisms are yet to be identified. It is possible that protection during anhydrobiosis might occur via the stabilization of vitrifying small molecules such as sugars, but not via the direct glass transition of CAHS proteins themselves. The polypeptide is Cytosolic-abundant heat soluble protein 1 (Ramazzottius varieornatus (Water bear)).